Reading from the N-terminus, the 1294-residue chain is Disease resistance protein L6 (1294 aa).

The signal sequence occupies residues 1–29 (MSYLREVATAVALLLPFILLNKFWRPNSK). The disordered stretch occupies residues 34–54 (NDDDDSTSEVDAISDSTNPSG). Positions 59 to 221 (VEYEVFLSFR…AIADKVSADI (163 aa)) constitute a TIR domain. NAD(+) is bound by residues 68–73 (RGPDTR) and Gly-101. The active site involves Glu-135. One can recognise an NB-ARC domain in the interval 241–480 (DDHITAVLEK…VYDRLKISYD (240 aa)). 11 LRR repeats span residues 246–268 (AVLE…GMGG), 468–492 (LDEV…IFLD), 604–625 (LSEL…NNLL), 626–650 (PNLK…NYTM), 904–928 (LENL…GLQG), 1012–1039 (FPML…SLEE), 1063–1085 (LQKL…LEEL), 1086–1109 (KSLQ…KLKE), 1179–1203 (LEEL…SFLS), 1205–1229 (LQKL…ELKS), and 1254–1278 (LKNL…ALKT).

It belongs to the disease resistance TIR-NB-LRR family. In terms of assembly, homooligomer; homooligomerization is required for activity.

The enzyme catalyses NAD(+) + H2O = ADP-D-ribose + nicotinamide + H(+). It catalyses the reaction NADP(+) + H2O = ADP-D-ribose 2'-phosphate + nicotinamide + H(+). The catalysed reaction is NAD(+) = 2'cADPR + nicotinamide + H(+). TIR-NB-LRR receptor-like protein that confers resistance to the flax rust phytopathogenic fungus (M.lini). An NAD(+) hydrolase (NADase): in response to activation, catalyzes cleavage of NAD(+) into ADP-D-ribose (ADPR) and nicotinamide; NAD(+) cleavage triggering a defense system that promotes cell death. Also able to hydrolyze NADP(+), but not other NAD(+)-related molecules. Makes small amounts of 2' cyclic ADPR (2'cADPR). The sequence is that of Disease resistance protein L6 from Linum usitatissimum (Flax).